The following is a 384-amino-acid chain: Flap endonuclease 1 (384 aa).

The N-domain stretch occupies residues 1-105 (MGVKGLNQLI…GELEKRLLKR (105 aa)). Residue aspartate 34 participates in Mg(2+) binding. DNA is bound by residues arginine 47 and arginine 71. Mg(2+) contacts are provided by aspartate 87, glutamate 159, glutamate 161, aspartate 180, and aspartate 182. An I-domain region spans residues 123 to 254 (DMTKYQKRLV…VTAYKLIKEH (132 aa)). Glutamate 159 contacts DNA. Residues glycine 232 and aspartate 234 each contribute to the DNA site. Residue aspartate 234 coordinates Mg(2+). Positions 341–349 (IQGRLDGFF) are interaction with PCNA. A disordered region spans residues 354-384 (KYSNTSPLGKDDKKRKTNDKKGAAAKKTKRR). The span at 362–375 (GKDDKKRKTNDKKG) shows a compositional bias: basic and acidic residues.

Belongs to the XPG/RAD2 endonuclease family. FEN1 subfamily. Interacts with PCNA. Three molecules of FEN1 bind to one PCNA trimer with each molecule binding to one PCNA monomer. PCNA stimulates the nuclease activity without altering cleavage specificity. Mg(2+) serves as cofactor. In terms of processing, phosphorylated. Phosphorylation upon DNA damage induces relocalization to the nuclear plasma.

Its subcellular location is the nucleus. It localises to the nucleolus. It is found in the nucleoplasm. The protein resides in the mitochondrion. Structure-specific nuclease with 5'-flap endonuclease and 5'-3' exonuclease activities involved in DNA replication and repair. During DNA replication, cleaves the 5'-overhanging flap structure that is generated by displacement synthesis when DNA polymerase encounters the 5'-end of a downstream Okazaki fragment. It enters the flap from the 5'-end and then tracks to cleave the flap base, leaving a nick for ligation. Also involved in the long patch base excision repair (LP-BER) pathway, by cleaving within the apurinic/apyrimidinic (AP) site-terminated flap. Acts as a genome stabilization factor that prevents flaps from equilibrating into structures that lead to duplications and deletions. Also possesses 5'-3' exonuclease activity on nicked or gapped double-stranded DNA, and exhibits RNase H activity. Also involved in replication and repair of rDNA and in repairing mitochondrial DNA. The sequence is that of Flap endonuclease 1 from Lodderomyces elongisporus (strain ATCC 11503 / CBS 2605 / JCM 1781 / NBRC 1676 / NRRL YB-4239) (Yeast).